Here is a 389-residue protein sequence, read N- to C-terminus: S-adenosylmethionine synthase (389 aa).

An ATP-binding site is contributed by His15. Asp17 is a Mg(2+) binding site. Glu43 provides a ligand contact to K(+). Glu56 and Gln99 together coordinate L-methionine. The segment at 99-109 is flexible loop; the sequence is QSSDIQYSIDH. ATP-binding positions include 166 to 168, 232 to 233, Asp241, 247 to 248, Ser264, and Lys268; these read DAK, RF, and RK. Asp241 is a binding site for L-methionine. Lys272 is an L-methionine binding site.

It belongs to the AdoMet synthase family. In terms of assembly, homotetramer; dimer of dimers. It depends on Mg(2+) as a cofactor. K(+) serves as cofactor.

It is found in the cytoplasm. It carries out the reaction L-methionine + ATP + H2O = S-adenosyl-L-methionine + phosphate + diphosphate. It participates in amino-acid biosynthesis; S-adenosyl-L-methionine biosynthesis; S-adenosyl-L-methionine from L-methionine: step 1/1. In terms of biological role, catalyzes the formation of S-adenosylmethionine (AdoMet) from methionine and ATP. The overall synthetic reaction is composed of two sequential steps, AdoMet formation and the subsequent tripolyphosphate hydrolysis which occurs prior to release of AdoMet from the enzyme. This chain is S-adenosylmethionine synthase, found in Blochmanniella pennsylvanica (strain BPEN).